The chain runs to 584 residues: A-type ATP synthase subunit A (584 aa).

233–240 (GPFGSGKT) contributes to the ATP binding site.

It belongs to the ATPase alpha/beta chains family. As to quaternary structure, has multiple subunits with at least A(3), B(3), C, D, E, F, H, I and proteolipid K(x).

It localises to the cell membrane. It catalyses the reaction ATP + H2O + 4 H(+)(in) = ADP + phosphate + 5 H(+)(out). Component of the A-type ATP synthase that produces ATP from ADP in the presence of a proton gradient across the membrane. The A chain is the catalytic subunit. The sequence is that of A-type ATP synthase subunit A from Methanothermobacter thermautotrophicus (strain ATCC 29096 / DSM 1053 / JCM 10044 / NBRC 100330 / Delta H) (Methanobacterium thermoautotrophicum).